Consider the following 191-residue polypeptide: Prostaglandin-H2 D-isomerase (191 aa).

The first 28 residues, Met1 to Ala28, serve as a signal peptide directing secretion. Asn51 is a glycosylation site (N-linked (GlcNAc...) asparagine). Cys65 (nucleophile) is an active-site residue. Asn78 carries an N-linked (GlcNAc...) asparagine glycan. A disulfide bond links Cys89 and Cys186.

It belongs to the calycin superfamily. Lipocalin family. As to quaternary structure, monomer. In the male reproductive system, expressed in the testis, epididymis and prostate, and secreted into the seminal fluid.

The protein localises to the rough endoplasmic reticulum. It localises to the nucleus membrane. It is found in the golgi apparatus. Its subcellular location is the cytoplasm. The protein resides in the perinuclear region. The protein localises to the secreted. It carries out the reaction prostaglandin H2 = prostaglandin D2. Catalyzes the conversion of PGH2 to PGD2, a prostaglandin involved in smooth muscle contraction/relaxation and a potent inhibitor of platelet aggregation. Involved in a variety of CNS functions, such as sedation, NREM sleep and PGE2-induced allodynia, and may have an anti-apoptotic role in oligodendrocytes. Binds small non-substrate lipophilic molecules, including biliverdin, bilirubin, retinal, retinoic acid and thyroid hormone, and may act as a scavenger for harmful hydrophobic molecules and as a secretory retinoid and thyroid hormone transporter. Possibly involved in development and maintenance of the blood-brain, blood-retina, blood-aqueous humor and blood-testis barrier. It is likely to play important roles in both maturation and maintenance of the central nervous system and male reproductive system. Involved in PLA2G3-dependent maturation of mast cells. PLA2G3 is secreted by immature mast cells and acts on nearby fibroblasts upstream to PTDGS to synthesize PGD2, which in turn promotes mast cell maturation and degranulation via PTGDR. This is Prostaglandin-H2 D-isomerase (PTGDS) from Bos taurus (Bovine).